The sequence spans 326 residues: Methionyl-tRNA formyltransferase (326 aa).

110-113 is a binding site for (6S)-5,6,7,8-tetrahydrofolate; it reads SLLP. The tract at residues 307 to 326 is disordered; that stretch reads VGTRFSPPEAPQREPAPGEA.

The protein belongs to the Fmt family.

It catalyses the reaction L-methionyl-tRNA(fMet) + (6R)-10-formyltetrahydrofolate = N-formyl-L-methionyl-tRNA(fMet) + (6S)-5,6,7,8-tetrahydrofolate + H(+). Attaches a formyl group to the free amino group of methionyl-tRNA(fMet). The formyl group appears to play a dual role in the initiator identity of N-formylmethionyl-tRNA by promoting its recognition by IF2 and preventing the misappropriation of this tRNA by the elongation apparatus. The polypeptide is Methionyl-tRNA formyltransferase (Symbiobacterium thermophilum (strain DSM 24528 / JCM 14929 / IAM 14863 / T)).